A 150-amino-acid chain; its full sequence is Major facilitator superfamily domain-containing 14C pseudogene (150 aa).

Residues Met-1–Lys-25 form a disordered region. The Extracellular segment spans residues Met-1–Ala-49. A helical membrane pass occupies residues Ile-50–Leu-70. Residues His-71–Asn-82 lie on the Cytoplasmic side of the membrane. A helical membrane pass occupies residues Gly-83–Leu-103. Residues Ser-104–Pro-111 lie on the Extracellular side of the membrane. A helical transmembrane segment spans residues Phe-112–Cys-132. Residues Arg-133–Ala-150 lie on the Cytoplasmic side of the membrane.

This sequence belongs to the major facilitator superfamily.

The protein localises to the membrane. This is Major facilitator superfamily domain-containing 14C pseudogene from Homo sapiens (Human).